Reading from the N-terminus, the 75-residue chain is Large ribosomal subunit protein bL31 (75 aa).

Belongs to the bacterial ribosomal protein bL31 family. Type A subfamily. Part of the 50S ribosomal subunit.

Binds the 23S rRNA. In Rhodopseudomonas palustris (strain BisB5), this protein is Large ribosomal subunit protein bL31.